A 213-amino-acid polypeptide reads, in one-letter code: MAKNYYDITLALSGICQSARLVQQLAHQGHCDADALHVSLNSVIDMNPSSTLGVFGGSEANLRLGLETLLGVLNASSRQGLNAELTRYTLSLMVLERKLSSAKGALNTLGDRINGLQRQLDHFDLQSDTLMSAMAGIYVDVISPLGPRIQVTGSPAVLQSPQVQAKVRASLLAGIRAAVLWHQVGGGRLQLMFSRHRLTTQAKQILAYLTPEL.

A coiled-coil region spans residues 79 to 122 (QGLNAELTRYTLSLMVLERKLSSAKGALNTLGDRINGLQRQLDH).

Belongs to the HflD family.

The protein localises to the cytoplasm. Its subcellular location is the cell inner membrane. This Salmonella typhi protein is High frequency lysogenization protein HflD homolog.